The primary structure comprises 192 residues: Ribosome hibernation promotion factor (192 aa).

The segment at 95–129 is disordered; the sequence is RVNRKHKTHGEPEAFVAEVQEAPPENVDDVNAEPT. Acidic residues predominate over residues 120–129; that stretch reads NVDDVNAEPT.

This sequence belongs to the HPF/YfiA ribosome-associated protein family. Long HPF subfamily. In terms of assembly, interacts with 100S ribosomes.

It localises to the cytoplasm. Its function is as follows. Required for dimerization of active 70S ribosomes into 100S ribosomes in stationary phase; 100S ribosomes are translationally inactive and sometimes present during exponential growth. This chain is Ribosome hibernation promotion factor, found in Staphylococcus haemolyticus (strain JCSC1435).